The chain runs to 259 residues: Ribonuclease HII (259 aa).

Residues 70–258 form the RNase H type-2 domain; it reads TLIAGIDEVG…VKSLVLGKKE (189 aa). Residues D76, E77, and D168 each contribute to the a divalent metal cation site.

This sequence belongs to the RNase HII family. Requires Mn(2+) as cofactor. It depends on Mg(2+) as a cofactor.

It localises to the cytoplasm. It catalyses the reaction Endonucleolytic cleavage to 5'-phosphomonoester.. Endonuclease that specifically degrades the RNA of RNA-DNA hybrids. The polypeptide is Ribonuclease HII (Streptococcus pneumoniae (strain 70585)).